Here is a 355-residue protein sequence, read N- to C-terminus: MLATDRTTLAQFLVEECRGRAGDDSELLGLLLDVAQACKTISKMTAMGSLAGVHGYNGDVNPQGENQARLDLMSNQAFVRATERTGHAAGLASEEMEEVLGFPESYARGTLLLVFDPLDGSSNIDINGTVGSIFSILPMPRPGEAPQTADFLQSGRQQVAAGYALYGPSTMFVLTIGSGVHGFTLDPLLGDFILTHPSMTVIPESGEFAINSSNSRFWEPPIRAYVDELLAGRSGPRSKDYNMRWIAALVADVHRILLRGGIYLYPRDTKTPDLAGRLRLLYEAAPVAFLMEQAGGRCTTGTRTMLDLVPGSLHERVPLIFGSAVEVERVETLYREPQRREFATPLFNQRGLFRD.

Residues E94, D116, L118, and D119 each coordinate Mg(2+). Substrate-binding positions include 119–122 (DGSS), N211, and 263–265 (YLY). E283 lines the Mg(2+) pocket.

Belongs to the FBPase class 1 family. Homotetramer. Mg(2+) is required as a cofactor.

Its subcellular location is the cytoplasm. The catalysed reaction is beta-D-fructose 1,6-bisphosphate + H2O = beta-D-fructose 6-phosphate + phosphate. It functions in the pathway carbohydrate biosynthesis; Calvin cycle. The sequence is that of Fructose-1,6-bisphosphatase class 1 from Rhodospirillum rubrum (strain ATCC 11170 / ATH 1.1.1 / DSM 467 / LMG 4362 / NCIMB 8255 / S1).